The chain runs to 154 residues: 17 kDa surface antigen (154 aa).

A signal peptide spans Met-1–Ala-19. Cys-20 is lipidated: N-palmitoyl cysteine. Cys-20 carries the S-diacylglycerol cysteine lipid modification.

This sequence belongs to the rickettsiale 17 kDa surface antigen family.

The protein resides in the cell outer membrane. The sequence is that of 17 kDa surface antigen (omp) from Rickettsia australis.